Reading from the N-terminus, the 562-residue chain is Ycf55-like protein (562 aa).

The Response regulatory domain occupies 7–125 (TIVIVDEDPV…DLVTGLKQVH (119 aa)).

It belongs to the ycf55 family.

This chain is Ycf55-like protein, found in Synechocystis sp. (strain ATCC 27184 / PCC 6803 / Kazusa).